Here is a 177-residue protein sequence, read N- to C-terminus: Ribulose bisphosphate carboxylase small subunit, chloroplastic 2 (177 aa).

A chloroplast-targeting transit peptide spans 1 to 56; sequence MASSMMASTAAVARAGPAQSNMVAPFNGLRSSVAFPATRKANKNLSTLPSNGGKVS.

Belongs to the RuBisCO small chain family. Heterohexadecamer of 8 large and 8 small subunits.

It localises to the plastid. Its subcellular location is the chloroplast. In terms of biological role, ruBisCO catalyzes two reactions: the carboxylation of D-ribulose 1,5-bisphosphate, the primary event in carbon dioxide fixation, as well as the oxidative fragmentation of the pentose substrate. Both reactions occur simultaneously and in competition at the same active site. Although the small subunit is not catalytic it is essential for maximal activity. The sequence is that of Ribulose bisphosphate carboxylase small subunit, chloroplastic 2 from Lemna gibba (Swollen duckweed).